We begin with the raw amino-acid sequence, 490 residues long: Homoserine O-acetyltransferase (490 aa).

In terms of domain architecture, AB hydrolase-1 spans 47–355; it reads NAILVCHALT…DYGHDAFLLE (309 aa). Catalysis depends on serine 152, which acts as the Nucleophile. Residue arginine 222 coordinates substrate. Active-site residues include aspartate 316 and histidine 349. Aspartate 350 contributes to the substrate binding site. 2 CBS domains span residues 376–436 and 437–490; these read MKTD…LEDV and MTKD…ISSY.

This sequence belongs to the AB hydrolase superfamily. MetX family. In terms of assembly, homodimer.

It is found in the cytoplasm. The catalysed reaction is L-homoserine + acetyl-CoA = O-acetyl-L-homoserine + CoA. It functions in the pathway amino-acid biosynthesis; L-methionine biosynthesis via de novo pathway; O-acetyl-L-homoserine from L-homoserine: step 1/1. Functionally, transfers an acetyl group from acetyl-CoA to L-homoserine, forming acetyl-L-homoserine. This chain is Homoserine O-acetyltransferase, found in Methanobrevibacter ruminantium (strain ATCC 35063 / DSM 1093 / JCM 13430 / OCM 146 / M1) (Methanobacterium ruminantium).